A 390-amino-acid chain; its full sequence is COP9/Signalosome and eIF3 complex-shared subunit 1 (390 aa).

The 164-residue stretch at 188-351 (QAAKVMTALL…RTLIVSSYQH (164 aa)) folds into the PCI domain.

This sequence belongs to the eIF-3 subunit M family. In terms of assembly, component of the eukaryotic translation initiation factor 3 (eIF-3) complex. Within the eIF-3 complex, interacts directly with eif-3.F. Component of the CSN complex, composed of csn-1, csn-2, csn-3, csn-4, csn-5, csn-6 and csn-7. Within the CSN complex, interacts directly with csn-1 and csn-4.

It is found in the cytoplasm. Functionally, component of the eukaryotic translation initiation factor 3 (eIF-3) complex, which is involved in protein synthesis of a specialized repertoire of mRNAs and, together with other initiation factors, stimulates binding of mRNA and methionyl-tRNAi to the 40S ribosome. The eIF-3 complex specifically targets and initiates translation of a subset of mRNAs involved in cell proliferation (Potential). Component of the COP9 signalosome complex (CSN), a complex involved in various cellular and developmental processes. The CSN complex is an essential regulator of the ubiquitin (Ubl) conjugation pathway by mediating the deneddylation of the cullin subunits of the SCF-type E3 ligase complexes, leading to decrease the Ubl ligase activity of SCF. The CSN complex plays an essential role in embryogenesis and oogenesis and is required to regulate microtubule stability in the early embryo. Mediates mei-1 targeting for degradation at the meiosis to mitosis transition via deneddylation of cul-3. The polypeptide is COP9/Signalosome and eIF3 complex-shared subunit 1 (Caenorhabditis elegans).